The chain runs to 168 residues: Monothiol glutaredoxin-S7, chloroplastic (168 aa).

Residues 1–54 (MAATAAASVAAISPLPGASLPRPVSARVPLLPRASPPTWRLSVGSARARSTRCL) constitute a chloroplast transit peptide. The region spanning 67–168 (RATLDKVVGS…QETLEKAMLS (102 aa)) is the Glutaredoxin domain. A glutathione-binding site is contributed by Lys-84. Cys-92 contacts [2Fe-2S] cluster. Glutathione contacts are provided by residues Arg-121, Phe-133, and 146 to 147 (CD).

This sequence belongs to the glutaredoxin family. CGFS subfamily.

The protein resides in the plastid. It localises to the chloroplast. In terms of biological role, may only reduce GSH-thiol disulfides, but not protein disulfides. In Oryza sativa subsp. japonica (Rice), this protein is Monothiol glutaredoxin-S7, chloroplastic (GRXS7).